The sequence spans 96 residues: Large ribosomal subunit protein bL27 (96 aa).

A propeptide spanning residues 1–10 (MLLKLNIQLF) is cleaved from the precursor.

The protein belongs to the bacterial ribosomal protein bL27 family. In terms of processing, the N-terminus is cleaved by ribosomal processing cysteine protease Prp.

This Phytoplasma mali (strain AT) protein is Large ribosomal subunit protein bL27.